Consider the following 503-residue polypeptide: Long-chain-aldehyde dehydrogenase (503 aa).

An NAD(+)-binding site is contributed by Gly-218–Gly-224. Residues Glu-262 and Cys-301 contribute to the active site.

Belongs to the aldehyde dehydrogenase family. In terms of assembly, homotetramer.

The enzyme catalyses a long-chain fatty aldehyde + NAD(+) + H2O = a long-chain fatty acid + NADH + 2 H(+). Its activity is regulated as follows. Completely inhibited by p-chloromercuribenzoate and N-ethylmaleimide. Strongly inhibited by iodoacetate. Inhibited by Pb(2+), Fe(3+), Ag(+) and Hg(2+) and partially inhibited by several other metal ions Mn(2+), Zn(2+) and Cu(2+). Aldehyde dehydrogenase that shows activity toward n-alkanals (C(4) to C(14)), with a preference for longer carbon chains. The best substrate is tetradecanal. The polypeptide is Long-chain-aldehyde dehydrogenase (ald1) (Acinetobacter sp).